Reading from the N-terminus, the 233-residue chain is Synaptogyrin-1 (233 aa).

M1 carries the post-translational modification N-acetylmethionine. The Cytoplasmic portion of the chain corresponds to 1-23 (MEGGAYGAGKAGGAFDPYTLVRQ). In terms of domain architecture, MARVEL spans 20-173 (LVRQPHTILR…QAVLAFQRYQ (154 aa)). The helical transmembrane segment at 24-44 (PHTILRVVSWLFSIVVFGSIV) threads the bilayer. Residues 45–71 (NEGYLNSASEGEEFCIYNRNPNACSYG) are Lumenal-facing. A helical transmembrane segment spans residues 72 to 92 (VAVGVLAFLTCLLYLALDVYF). The Cytoplasmic portion of the chain corresponds to 93–103 (PQISSVKDRKK). Residues 104–124 (AVLSDIGVSAFWAFLWFVGFC) traverse the membrane as a helical segment. At 125–148 (YLANQWQVSKPKDNPLNEGTDAAR) the chain is on the lumenal side. A helical membrane pass occupies residues 149–169 (AAIAFSFFSIFTWAGQAVLAF). Residues 170–233 (QRYQIGADSA…EPQGYQSQGY (64 aa)) lie on the Cytoplasmic side of the membrane. Residues 194 to 233 (MPYAPYVEPTGPDPAGMGGTYQQPANTFDTEPQGYQSQGY) form a disordered region. Polar residues predominate over residues 213–233 (TYQQPANTFDTEPQGYQSQGY).

This sequence belongs to the synaptogyrin family.

The protein localises to the cytoplasmic vesicle. It is found in the secretory vesicle. The protein resides in the synaptic vesicle membrane. It localises to the melanosome. Functionally, may play a role in regulated exocytosis. Modulates the localization of synaptophysin/SYP into synaptic-like microvesicles and may therefore play a role in synaptic-like microvesicle formation and/or maturation. Involved in the regulation of short-term and long-term synaptic plasticity. The polypeptide is Synaptogyrin-1 (Homo sapiens (Human)).